The chain runs to 491 residues: Proline--tRNA ligase (491 aa).

The protein belongs to the class-II aminoacyl-tRNA synthetase family. ProS type 3 subfamily. Homodimer.

The protein localises to the cytoplasm. The enzyme catalyses tRNA(Pro) + L-proline + ATP = L-prolyl-tRNA(Pro) + AMP + diphosphate. Its function is as follows. Catalyzes the attachment of proline to tRNA(Pro) in a two-step reaction: proline is first activated by ATP to form Pro-AMP and then transferred to the acceptor end of tRNA(Pro). This is Proline--tRNA ligase from Cytophaga hutchinsonii (strain ATCC 33406 / DSM 1761 / CIP 103989 / NBRC 15051 / NCIMB 9469 / D465).